A 363-amino-acid polypeptide reads, in one-letter code: Phospho-N-acetylmuramoyl-pentapeptide-transferase (363 aa).

The next 11 membrane-spanning stretches (helical) occupy residues 4–24, 28–48, 72–92, 96–116, 129–149, 169–189, 200–220, 241–261, 266–286, 294–314, and 342–362; these read NLLVSHINSCYIFSIFYNVIV, IAILLSFSISFSLIPILIKYF, TPTMGGIAIIFSIIISTLMLA, NIYVLTTIFGMLSLAILGLID, INATCKLISQIMVSIICCMIV, LTIDLSIFYIPFALFIIIGSS, GLVTVPIIIVSFCLGLMCYLA, ELTVLCSAIIGASLGFLWYNI, IFMGDVGSLSLGGAIGIISVI, GIIGGLFVIEALSAIIQIYSI, and IVSRFWLLSIIFSLIGLSSLI.

The protein belongs to the glycosyltransferase 4 family. MraY subfamily. The cofactor is Mg(2+).

It is found in the cell inner membrane. It catalyses the reaction UDP-N-acetyl-alpha-D-muramoyl-L-alanyl-gamma-D-glutamyl-meso-2,6-diaminopimeloyl-D-alanyl-D-alanine + di-trans,octa-cis-undecaprenyl phosphate = di-trans,octa-cis-undecaprenyl diphospho-N-acetyl-alpha-D-muramoyl-L-alanyl-D-glutamyl-meso-2,6-diaminopimeloyl-D-alanyl-D-alanine + UMP. It functions in the pathway cell wall biogenesis; peptidoglycan biosynthesis. Its function is as follows. Catalyzes the initial step of the lipid cycle reactions in the biosynthesis of the cell wall peptidoglycan: transfers peptidoglycan precursor phospho-MurNAc-pentapeptide from UDP-MurNAc-pentapeptide onto the lipid carrier undecaprenyl phosphate, yielding undecaprenyl-pyrophosphoryl-MurNAc-pentapeptide, known as lipid I. This Orientia tsutsugamushi (strain Ikeda) (Rickettsia tsutsugamushi) protein is Phospho-N-acetylmuramoyl-pentapeptide-transferase.